A 172-amino-acid chain; its full sequence is Small ribosomal subunit protein uS5 (172 aa).

Positions 7-70 (VVEHLVNVNR…QNAKKYMIEV (64 aa)) constitute an S5 DRBM domain.

This sequence belongs to the universal ribosomal protein uS5 family. As to quaternary structure, part of the 30S ribosomal subunit. Contacts proteins S4 and S8.

Functionally, with S4 and S12 plays an important role in translational accuracy. In terms of biological role, located at the back of the 30S subunit body where it stabilizes the conformation of the head with respect to the body. This is Small ribosomal subunit protein uS5 from Orientia tsutsugamushi (strain Boryong) (Rickettsia tsutsugamushi).